The following is a 352-amino-acid chain: Biotin synthase (352 aa).

The Radical SAM core domain occupies 44–262; sequence NRVQVSTLLS…LAVARIMMPK (219 aa). Residues cysteine 59, cysteine 63, and cysteine 66 each contribute to the [4Fe-4S] cluster site. Residues cysteine 103, cysteine 134, cysteine 194, and arginine 266 each contribute to the [2Fe-2S] cluster site.

This sequence belongs to the radical SAM superfamily. Biotin synthase family. Homodimer. Requires [4Fe-4S] cluster as cofactor. It depends on [2Fe-2S] cluster as a cofactor.

It catalyses the reaction (4R,5S)-dethiobiotin + (sulfur carrier)-SH + 2 reduced [2Fe-2S]-[ferredoxin] + 2 S-adenosyl-L-methionine = (sulfur carrier)-H + biotin + 2 5'-deoxyadenosine + 2 L-methionine + 2 oxidized [2Fe-2S]-[ferredoxin]. It participates in cofactor biosynthesis; biotin biosynthesis; biotin from 7,8-diaminononanoate: step 2/2. Its function is as follows. Catalyzes the conversion of dethiobiotin (DTB) to biotin by the insertion of a sulfur atom into dethiobiotin via a radical-based mechanism. This chain is Biotin synthase, found in Pseudomonas paraeruginosa (strain DSM 24068 / PA7) (Pseudomonas aeruginosa (strain PA7)).